We begin with the raw amino-acid sequence, 193 residues long: Ion-translocating oxidoreductase complex subunit A (193 aa).

The next 6 membrane-spanning stretches (helical) occupy residues 5 to 25 (LLLF…FLGL), 39 to 59 (MGMG…AWLI), 63 to 83 (ILIP…VIAV), 102 to 122 (LLGI…VALL), 134 to 154 (ALYG…FAAI), and 171 to 191 (AIAL…NGLV).

It belongs to the NqrDE/RnfAE family. The complex is composed of six subunits: RsxA, RsxB, RsxC, RsxD, RsxE and RsxG.

It is found in the cell inner membrane. Functionally, part of a membrane-bound complex that couples electron transfer with translocation of ions across the membrane. Required to maintain the reduced state of SoxR. This chain is Ion-translocating oxidoreductase complex subunit A, found in Shigella sonnei (strain Ss046).